Here is a 145-residue protein sequence, read N- to C-terminus: D-aminoacyl-tRNA deacylase (145 aa).

Residues 137-138 carry the Gly-cisPro motif, important for rejection of L-amino acids motif; it reads GP.

This sequence belongs to the DTD family. As to quaternary structure, homodimer.

The protein resides in the cytoplasm. The catalysed reaction is glycyl-tRNA(Ala) + H2O = tRNA(Ala) + glycine + H(+). The enzyme catalyses a D-aminoacyl-tRNA + H2O = a tRNA + a D-alpha-amino acid + H(+). An aminoacyl-tRNA editing enzyme that deacylates mischarged D-aminoacyl-tRNAs. Also deacylates mischarged glycyl-tRNA(Ala), protecting cells against glycine mischarging by AlaRS. Acts via tRNA-based rather than protein-based catalysis; rejects L-amino acids rather than detecting D-amino acids in the active site. By recycling D-aminoacyl-tRNA to D-amino acids and free tRNA molecules, this enzyme counteracts the toxicity associated with the formation of D-aminoacyl-tRNA entities in vivo and helps enforce protein L-homochirality. The chain is D-aminoacyl-tRNA deacylase from Rhodococcus jostii (strain RHA1).